A 139-amino-acid chain; its full sequence is Nucleoside diphosphate kinase (139 aa).

ATP-binding residues include Lys10, Phe58, Arg86, Thr92, Arg104, and Asn114. Catalysis depends on His117, which acts as the Pros-phosphohistidine intermediate.

Belongs to the NDK family. In terms of assembly, homotetramer. Mg(2+) is required as a cofactor.

It is found in the cytoplasm. It carries out the reaction a 2'-deoxyribonucleoside 5'-diphosphate + ATP = a 2'-deoxyribonucleoside 5'-triphosphate + ADP. It catalyses the reaction a ribonucleoside 5'-diphosphate + ATP = a ribonucleoside 5'-triphosphate + ADP. In terms of biological role, major role in the synthesis of nucleoside triphosphates other than ATP. The ATP gamma phosphate is transferred to the NDP beta phosphate via a ping-pong mechanism, using a phosphorylated active-site intermediate. The protein is Nucleoside diphosphate kinase of Rhodococcus opacus (strain B4).